The sequence spans 472 residues: Homeobox protein PKNOX2 (472 aa).

The segment at 1-62 is disordered; the sequence is MMQHASPAPA…STPVPSAPID (62 aa). Over residues 26-38 the composition is skewed to polar residues; the sequence is DSPQMTATAQPPS. A compositionally biased stretch (low complexity) spans 46 to 56; sequence SAPSAAASTPV. The 84-residue stretch at 96 to 179 folds into the MEIS N-terminal domain; the sequence is GSECITSASF…MHSDNLLRND (84 aa). The segment at residues 291–350 is a DNA-binding region (homeobox); sequence KRGVLPKHATNIMRSWLFQHLMHPYPTEDEKRQIAAQTNLTLLQVNNWFINARRRILQPM. Disordered regions lie at residues 351–371, 386–405, and 422–472; these read LDAS…QHRP, QQQG…LDNL, and MAAH…DSLE. The segment covering 361 to 371 has biased composition (basic residues); the sequence is KAKKIKSQHRP. The span at 429–454 shows a compositional bias: acidic residues; that stretch reads LDGTEEEDEDEMEEEEEEELEEEVDE.

This sequence belongs to the TALE/MEIS homeobox family.

It localises to the nucleus. This chain is Homeobox protein PKNOX2 (PKNOX2), found in Homo sapiens (Human).